We begin with the raw amino-acid sequence, 598 residues long: MTVVVPEEGLDLESQPDDRMRAKALATSAAELPDGYYRSPRIVASFAAFSMNVVATYFVLQASASALPNILQDVGQSENSSLFSTLWTTGQAVSILMMGRLTDRFGRRPFVILTHILGLVGAIVGCTATKFNTLLAAMTMLGVAAGPAGASPLFIGELMSNKTKFLGLLIVSAPVVATNGLSPYLGQRLAIQGSWRWIFYIYIIMSTIAVTLIIIWYYPPSFAQLHGKKVSKREELAKVDWIGIILVIAGTSLFLLGVSWGGQPNNPWNSAKVIGLISSGAGTLVIFALYEVYGKPERPMVPPSLFKDTRGFVCILIISSIMGSMHLSLVIMYPQQVVNIFGSSLKNWEETAWMSATASFGTGAGVVVLGSLFHLVRHIRWQILVGAMWLTAFLGAMSSINRDNKNSAIALSVMTGFVVAWAQDITMLLVQFITTDENLGVAFAVVAAARPFAGSIFTAAFISVYTNRYPRELATHLSSALRGTGFPQGSFSSLLEAAKSGRMEAVNALPGMTTEISSVVSQAMADSYTASYANVYYFAMALGVIPIIASLCMRDLDCYLTDHVPHQLYDRKNAHKDVLEGNSESQPSPIILSMADKE.

The chain crosses the membrane as a helical span at residues 42–62 (IVASFAAFSMNVVATYFVLQA). N-linked (GlcNAc...) asparagine glycosylation is present at N79. A run of 2 helical transmembrane segments spans residues 109–129 (PFVILTHILGLVGAIVGCTAT) and 135–155 (LAAMTMLGVAAGPAGASPLFI). The N-linked (GlcNAc...) asparagine glycan is linked to N161. A run of 10 helical transmembrane segments spans residues 165–185 (FLGLLIVSAPVVATNGLSPYL), 197–217 (WIFYIYIIMSTIAVTLIIIWY), 241–261 (WIGIILVIAGTSLFLLGVSWG), 273–293 (VIGLISSGAGTLVIFALYEVY), 312–332 (FVCILIISSIMGSMHLSLVIM), 356–376 (ATASFGTGAGVVVLGSLFHLV), 381–401 (WQILVGAMWLTAFLGAMSSIN), 409–429 (IALSVMTGFVVAWAQDITMLL), 442–462 (AFAVVAAARPFAGSIFTAAFI), and 533–553 (ANVYYFAMALGVIPIIASLCM). The interval 579–598 (LEGNSESQPSPIILSMADKE) is disordered.

It belongs to the major facilitator superfamily.

Its subcellular location is the cell membrane. Functionally, efflux pump that provides the dual role of trichothecene export and self-protection by allowing the fungus to evade the harmful effect of its own trichothecene production. This chain is Trichothecene efflux pump TRI12, found in Fusarium sporotrichioides.